We begin with the raw amino-acid sequence, 152 residues long: Deoxyuridine 5'-triphosphate nucleotidohydrolase (152 aa).

Substrate contacts are provided by residues 71 to 73 (RSG), asparagine 84, and 88 to 90 (TVD).

The protein belongs to the dUTPase family. Mg(2+) serves as cofactor.

The catalysed reaction is dUTP + H2O = dUMP + diphosphate + H(+). The protein operates within pyrimidine metabolism; dUMP biosynthesis; dUMP from dCTP (dUTP route): step 2/2. Functionally, this enzyme is involved in nucleotide metabolism: it produces dUMP, the immediate precursor of thymidine nucleotides and it decreases the intracellular concentration of dUTP so that uracil cannot be incorporated into DNA. This Maricaulis maris (strain MCS10) (Caulobacter maris) protein is Deoxyuridine 5'-triphosphate nucleotidohydrolase.